The sequence spans 678 residues: Glycine--tRNA ligase beta subunit (678 aa).

The protein belongs to the class-II aminoacyl-tRNA synthetase family. As to quaternary structure, tetramer of two alpha and two beta subunits.

It is found in the cytoplasm. The enzyme catalyses tRNA(Gly) + glycine + ATP = glycyl-tRNA(Gly) + AMP + diphosphate. This is Glycine--tRNA ligase beta subunit from Streptococcus pneumoniae (strain Hungary19A-6).